Reading from the N-terminus, the 544-residue chain is Coiled-coil domain-containing protein 82 (544 aa).

Basic residues predominate over residues 1 to 14 (MIHVRRHETRRNSK). A disordered region spans residues 1 to 294 (MIHVRRHETR…ESDEDGDDYI (294 aa)). A compositionally biased stretch (basic and acidic residues) spans 16–27 (HVPEQKSRVDWR). The span at 39–67 (DSDEELDSEEFDSDEELDSDESFENDEEL) shows a compositional bias: acidic residues. Ser88, Ser131, Ser154, Ser195, and Ser219 each carry phosphoserine. The span at 88-108 (SKIQSEGNDSKCLINSGNGST) shows a compositional bias: polar residues. Over residues 112–132 (ETNKIKHRNIDLQDQEKHLSQ) the composition is skewed to basic and acidic residues. A compositionally biased stretch (basic and acidic residues) spans 223 to 248 (MEQKTPEKTLAAQKREKLQKLKELSK). Thr227 bears the Phosphothreonine mark. Residues 229–256 (EKTLAAQKREKLQKLKELSKQRSRQRRS) adopt a coiled-coil conformation. Residues 273 to 294 (DEVDEEEEEDNYESDEDGDDYI) are compositionally biased toward acidic residues. Position 329 is a phosphoserine (Ser329).

This Homo sapiens (Human) protein is Coiled-coil domain-containing protein 82 (CCDC82).